The sequence spans 132 residues: Small ribosomal subunit protein eS12 (132 aa).

The protein belongs to the eukaryotic ribosomal protein eS12 family.

This Oreochromis niloticus (Nile tilapia) protein is Small ribosomal subunit protein eS12 (rps12).